The chain runs to 175 residues: ATP synthase subunit delta (175 aa).

Belongs to the ATPase delta chain family. F-type ATPases have 2 components, F(1) - the catalytic core - and F(0) - the membrane proton channel. F(1) has five subunits: alpha(3), beta(3), gamma(1), delta(1), epsilon(1). F(0) has three main subunits: a(1), b(2) and c(10-14). The alpha and beta chains form an alternating ring which encloses part of the gamma chain. F(1) is attached to F(0) by a central stalk formed by the gamma and epsilon chains, while a peripheral stalk is formed by the delta and b chains.

Its subcellular location is the cell membrane. Its function is as follows. F(1)F(0) ATP synthase produces ATP from ADP in the presence of a proton or sodium gradient. F-type ATPases consist of two structural domains, F(1) containing the extramembraneous catalytic core and F(0) containing the membrane proton channel, linked together by a central stalk and a peripheral stalk. During catalysis, ATP synthesis in the catalytic domain of F(1) is coupled via a rotary mechanism of the central stalk subunits to proton translocation. In terms of biological role, this protein is part of the stalk that links CF(0) to CF(1). It either transmits conformational changes from CF(0) to CF(1) or is implicated in proton conduction. The chain is ATP synthase subunit delta from Lactococcus lactis subsp. lactis (strain IL1403) (Streptococcus lactis).